Here is a 485-residue protein sequence, read N- to C-terminus: T-complex protein 1 subunit theta (485 aa).

It belongs to the TCP-1 chaperonin family. Component of the T-complex protein 1 (TCP1) complex.

It is found in the cytoplasm. Its function is as follows. Molecular chaperone; assists the folding of proteins upon ATP hydrolysis. In Encephalitozoon cuniculi (strain GB-M1) (Microsporidian parasite), this protein is T-complex protein 1 subunit theta (CCT8).